We begin with the raw amino-acid sequence, 550 residues long: Membrane protein insertase YidC (550 aa).

6 helical membrane-spanning segments follow: residues 6–26 (LVLF…WLKQ), 333–353 (VVDY…LSWI), 356–376 (VVGN…LMFF), 430–450 (LPIL…LGSV), 469–489 (PYFI…KLNP), and 504–524 (PVIF…YWVV).

The protein belongs to the OXA1/ALB3/YidC family. Type 1 subfamily. In terms of assembly, interacts with the Sec translocase complex via SecD. Specifically interacts with transmembrane segments of nascent integral membrane proteins during membrane integration.

It localises to the cell inner membrane. Its function is as follows. Required for the insertion and/or proper folding and/or complex formation of integral membrane proteins into the membrane. Involved in integration of membrane proteins that insert both dependently and independently of the Sec translocase complex, as well as at least some lipoproteins. Aids folding of multispanning membrane proteins. This is Membrane protein insertase YidC from Aromatoleum aromaticum (strain DSM 19018 / LMG 30748 / EbN1) (Azoarcus sp. (strain EbN1)).